The following is a 484-amino-acid chain: tRNA sulfurtransferase (484 aa).

The THUMP domain occupies 63–167; the sequence is EAFGERLACI…NEQLYLVDKR (105 aa). Residues 185–186, K267, G289, and Q298 each bind ATP; that span reads LI. C346 and C458 are oxidised to a cystine. The Rhodanese domain occupies 406 to 484; it reads ISADEVIIDV…GYSNVKVYRP (79 aa). The active-site Cysteine persulfide intermediate is C458.

The protein belongs to the ThiI family.

It localises to the cytoplasm. It carries out the reaction [ThiI sulfur-carrier protein]-S-sulfanyl-L-cysteine + a uridine in tRNA + 2 reduced [2Fe-2S]-[ferredoxin] + ATP + H(+) = [ThiI sulfur-carrier protein]-L-cysteine + a 4-thiouridine in tRNA + 2 oxidized [2Fe-2S]-[ferredoxin] + AMP + diphosphate. The enzyme catalyses [ThiS sulfur-carrier protein]-C-terminal Gly-Gly-AMP + S-sulfanyl-L-cysteinyl-[cysteine desulfurase] + AH2 = [ThiS sulfur-carrier protein]-C-terminal-Gly-aminoethanethioate + L-cysteinyl-[cysteine desulfurase] + A + AMP + 2 H(+). The protein operates within cofactor biosynthesis; thiamine diphosphate biosynthesis. Functionally, catalyzes the ATP-dependent transfer of a sulfur to tRNA to produce 4-thiouridine in position 8 of tRNAs, which functions as a near-UV photosensor. Also catalyzes the transfer of sulfur to the sulfur carrier protein ThiS, forming ThiS-thiocarboxylate. This is a step in the synthesis of thiazole, in the thiamine biosynthesis pathway. The sulfur is donated as persulfide by IscS. The sequence is that of tRNA sulfurtransferase from Shewanella piezotolerans (strain WP3 / JCM 13877).